Here is a 350-residue protein sequence, read N- to C-terminus: Thymidine kinase (350 aa).

ATP is bound at residue 17–24 (GPFGIGKT). Glutamate 45 serves as the catalytic Proton acceptor. Substrate is bound at residue glutamine 86. ATP is bound at residue arginine 176. Position 182 (arginine 182) interacts with substrate.

Belongs to the herpesviridae thymidine kinase family. In terms of assembly, homodimer.

It carries out the reaction thymidine + ATP = dTMP + ADP + H(+). Its function is as follows. Catalyzes the transfer of the gamma-phospho group of ATP to thymidine to generate dTMP in the salvage pathway of pyrimidine synthesis. The dTMP serves as a substrate for DNA polymerase during viral DNA replication. Allows the virus to be reactivated and to grow in non-proliferative cells lacking a high concentration of phosphorylated nucleic acid precursors. The protein is Thymidine kinase of Gallus gallus (Chicken).